The following is a 577-amino-acid chain: Arginine--tRNA ligase (577 aa).

Positions 122–132 match the 'HIGH' region motif; sequence PNVAKEMHVGH.

The protein belongs to the class-I aminoacyl-tRNA synthetase family. Monomer.

Its subcellular location is the cytoplasm. The enzyme catalyses tRNA(Arg) + L-arginine + ATP = L-arginyl-tRNA(Arg) + AMP + diphosphate. The protein is Arginine--tRNA ligase of Citrobacter koseri (strain ATCC BAA-895 / CDC 4225-83 / SGSC4696).